The following is a 236-amino-acid chain: Aquaporin Z (236 aa).

2 helical membrane passes run 12-32 (FFGTFWLVLGGCGSAVLAAGV) and 37-57 (IGYAGVALAFGLTVLTMAYAV). The NPA 1 motif lies at 66 to 68 (NPA). The next 3 helical transmembrane spans lie at 92–112 (VVGAIVAAATLASIAQGVAGF), 136–156 (AALICEIVLSAGFVFVILGAT), and 163–183 (GFAPIPIGLALTLIHLISIPV). Residues 189 to 191 (NPA) carry the NPA 2 motif. The helical transmembrane segment at 197 to 217 (ALFVGGWALEQLWLFWLAPIA) threads the bilayer.

The protein belongs to the MIP/aquaporin (TC 1.A.8) family. In terms of assembly, homotetramer.

The protein resides in the cell inner membrane. The enzyme catalyses H2O(in) = H2O(out). Functionally, channel that permits osmotically driven movement of water in both directions. It is involved in the osmoregulation and in the maintenance of cell turgor during volume expansion in rapidly growing cells. It mediates rapid entry or exit of water in response to abrupt changes in osmolarity. This chain is Aquaporin Z, found in Bordetella bronchiseptica (strain ATCC BAA-588 / NCTC 13252 / RB50) (Alcaligenes bronchisepticus).